The sequence spans 268 residues: MQREEKQLEACLDALISQVSDIKNSLVGFIHKLENEFDRLTWPSVLDSFALLSGQLNTLNKVLKNEKTPLLRNQVIIPLLLSPDRDEEIMRLTEGRVPVFSHEVVPDHLRTKPDPDVEELEKQLSAEAARITTEAAQKQVQSMNKMCSNLLDKISKEERESELGSLRQNKQTFNPTDTNALVAAVAFGKGLSNRRPPGQGGPMAPGQTGASGMLPSAAGMQQVPMSLQSNQQQQHMAGVSMSQGNQPGKMPSSIKTNIKSASMHPYQR.

Coiled-coil stretches lie at residues 1-26 (MQRE…KNSL) and 117-160 (VEEL…EERE). The interval 190–268 (GLSNRRPPGQ…KSASMHPYQR (79 aa)) is disordered. The span at 223–246 (VPMSLQSNQQQQHMAGVSMSQGNQ) shows a compositional bias: polar residues.

It belongs to the Mediator complex subunit 8 family. Component of the Mediator complex. May be part of a multisubunit E3 ubiquitin-protein ligase complex.

The protein localises to the nucleus. It participates in protein modification; protein ubiquitination. Its function is as follows. Component of the Mediator complex, a coactivator involved in the regulated transcription of nearly all RNA polymerase II-dependent genes. Mediator functions as a bridge to convey information from gene-specific regulatory proteins to the basal RNA polymerase II transcription machinery. Mediator is recruited to promoters by direct interactions with regulatory proteins and serves as a scaffold for the assembly of a functional preinitiation complex with RNA polymerase II and the general transcription factors. May play a role as a target recruitment subunit in E3 ubiquitin-protein ligase complexes and thus in ubiquitination and subsequent proteasomal degradation of target proteins. In Xenopus laevis (African clawed frog), this protein is Mediator of RNA polymerase II transcription subunit 8-A (med8-a).